The following is a 209-amino-acid chain: MTKGILGRKVGMTQVFTENGELIPVTVIEAAQNVVLQKKTVETDGYEAVQIGFEDKRAILSNKPEQGHVAKANTTPKRFIREFRDVNLDEYEIGAEVKVDVFAEGDIIDATGVSKGKGFQGVIKRHGQSRGPMAHGSRYHRRPGSMGPVAPNRVFKNKLLPGRMGGEQITIQNLEIVKVDVEKNVLLVKGNVPGAKKALVQIKTATKAK.

The interval 126–148 (HGQSRGPMAHGSRYHRRPGSMGP) is disordered.

The protein belongs to the universal ribosomal protein uL3 family. In terms of assembly, part of the 50S ribosomal subunit. Forms a cluster with proteins L14 and L19.

One of the primary rRNA binding proteins, it binds directly near the 3'-end of the 23S rRNA, where it nucleates assembly of the 50S subunit. This chain is Large ribosomal subunit protein uL3, found in Listeria monocytogenes serotype 4b (strain CLIP80459).